We begin with the raw amino-acid sequence, 181 residues long: Sporozoite-associated mosquito saliva protein 1 (181 aa).

The signal sequence occupies residues 1–24; sequence MNSSWRVVVFLGLVILCHSRRARA.

Salivary gland (at protein level). In terms of tissue distribution, (Microbial infection) Detected with Plasmodium berghei sporozoites isolated from the saliva of infected Anopheles gambiae mosquitoes (at protein level).

The protein resides in the secreted. Functionally, decreases host neutrophil chemotaxis induced by N-formylmethionine-leucyl-phenylalanine (fMLP). Its function is as follows. (Microbial infection) Interacts with the surface of Plasmodium berghei sporozoites. Enhances sporozoite gliding activity. Enhances host hepatocyte traversal by sporozoites. This is Sporozoite-associated mosquito saliva protein 1 from Anopheles gambiae (African malaria mosquito).